The primary structure comprises 341 residues: MQLSDFDFELPEELIAQEPIKQRDQSRLMIVHRDIDRTEHKTFKDLLQYLQPGDVLVMNDSKVLPARIYGEKVSTGAKIEVLLLRQISANQWETLVKPGKRAKIGEILDFGSGKMKGKIVDHTDVGGRVIEFSCQEPFLQVLEQIGSMPLPPYIKKPLTDKQRYQTVYARQEGSAAAPTAGLHFTRELLEEIRNRGVSIVTVLLHVGLGTFRPVQVEDVTSHRMHEEYYEITPQAAEEINQAKLRGGRVIAVGTTSVRCLETSSNEAGQVLPGSGFTDIFIYPGYQFKVIEGLVTNFHLPKSSLLMLISALAGREKILKAYQQAVTEQYRFFSFGDAMLII.

The protein belongs to the QueA family. In terms of assembly, monomer.

It localises to the cytoplasm. It carries out the reaction 7-aminomethyl-7-carbaguanosine(34) in tRNA + S-adenosyl-L-methionine = epoxyqueuosine(34) in tRNA + adenine + L-methionine + 2 H(+). Its pathway is tRNA modification; tRNA-queuosine biosynthesis. In terms of biological role, transfers and isomerizes the ribose moiety from AdoMet to the 7-aminomethyl group of 7-deazaguanine (preQ1-tRNA) to give epoxyqueuosine (oQ-tRNA). The chain is S-adenosylmethionine:tRNA ribosyltransferase-isomerase from Desulforamulus reducens (strain ATCC BAA-1160 / DSM 100696 / MI-1) (Desulfotomaculum reducens).